Here is a 542-residue protein sequence, read N- to C-terminus: Phosphoenolpyruvate carboxykinase (ATP) (542 aa).

R67, Y208, and K214 together coordinate substrate. ATP is bound by residues K214, H233, and 249 to 257; that span reads GLSGTGKTT. Residues K214 and H233 each coordinate Mn(2+). Residue D270 participates in Mn(2+) binding. ATP contacts are provided by residues E298, R334, 450 to 451, and T456; that span reads RI. R334 contributes to the substrate binding site.

This sequence belongs to the phosphoenolpyruvate carboxykinase (ATP) family. As to quaternary structure, monomer. Requires Mn(2+) as cofactor.

It is found in the cytoplasm. The catalysed reaction is oxaloacetate + ATP = phosphoenolpyruvate + ADP + CO2. It functions in the pathway carbohydrate biosynthesis; gluconeogenesis. Functionally, involved in the gluconeogenesis. Catalyzes the conversion of oxaloacetate (OAA) to phosphoenolpyruvate (PEP) through direct phosphoryl transfer between the nucleoside triphosphate and OAA. In Vibrio vulnificus (strain YJ016), this protein is Phosphoenolpyruvate carboxykinase (ATP).